Here is a 462-residue protein sequence, read N- to C-terminus: Argininosuccinate lyase (462 aa).

This sequence belongs to the lyase 1 family. Argininosuccinate lyase subfamily.

The protein localises to the cytoplasm. The enzyme catalyses 2-(N(omega)-L-arginino)succinate = fumarate + L-arginine. Its pathway is amino-acid biosynthesis; L-arginine biosynthesis; L-arginine from L-ornithine and carbamoyl phosphate: step 3/3. This is Argininosuccinate lyase from Caldicellulosiruptor bescii (strain ATCC BAA-1888 / DSM 6725 / KCTC 15123 / Z-1320) (Anaerocellum thermophilum).